Consider the following 850-residue polypeptide: Receptor-like serine/threonine-protein kinase SD1-8 (850 aa).

Positions 1 to 26 (MRGLPNFYHSYTFFFFFLLILFPAYS) are cleaved as a signal peptide. Residues 27–441 (ISANTLSASE…LEDKRNRSAK (415 aa)) are Extracellular-facing. The region spanning 31 to 153 (TLSASESLTI…KNSAPDGVLW (123 aa)) is the Bulb-type lectin domain. 3 N-linked (GlcNAc...) asparagine glycosylation sites follow: asparagine 43, asparagine 118, and asparagine 242. Residues 292–328 (PKDQCDEYKECGVYGYCDSNTSPVCNCIKGFKPRNPQ) form the EGF-like domain. Intrachain disulfides connect cysteine 296-cysteine 308, cysteine 302-cysteine 316, cysteine 378-cysteine 403, and cysteine 382-cysteine 388. The PAN domain occupies 347-428 (CGGGDGFVRL…GGQDLYVRLA (82 aa)). N-linked (GlcNAc...) asparagine glycans are attached at residues asparagine 387 and asparagine 437. A helical membrane pass occupies residues 442 to 462 (IIGSSIGVSVLLLLSFIIFFL). Residues 463-850 (WKRKQKRSIL…QITVSVLDAR (388 aa)) are Cytoplasmic-facing. One can recognise a Protein kinase domain in the interval 526–807 (FSNANKLGQG…LMLGSESTTI (282 aa)). ATP-binding positions include 532-540 (LGQGGFGIV) and lysine 554. Residues 615-632 (SRNSKLNWQMRFDIINGI) are caM-binding. Residue aspartate 651 is the Proton acceptor of the active site.

Belongs to the protein kinase superfamily. Ser/Thr protein kinase family. As to quaternary structure, interacts with PUB9, PUB13, PUB14 and PUB38. Expressed in the root-hypocotyl transition zone, at the base of lateral roots, axillary buds and pedicels.

Its subcellular location is the cell membrane. It carries out the reaction L-seryl-[protein] + ATP = O-phospho-L-seryl-[protein] + ADP + H(+). It catalyses the reaction L-threonyl-[protein] + ATP = O-phospho-L-threonyl-[protein] + ADP + H(+). Functionally, involved in the regulation of cellular expansion and differentiation. The protein is Receptor-like serine/threonine-protein kinase SD1-8 (SD18) of Arabidopsis thaliana (Mouse-ear cress).